Here is a 632-residue protein sequence, read N- to C-terminus: Mediator of RNA polymerase II transcription subunit 17 (632 aa).

Disordered regions lie at residues 1-21 (MSDS…RPDS) and 50-72 (EDKH…DLET). A compositionally biased stretch (basic and acidic residues) spans 11–21 (PIREKRDRPDS). Over residues 58–72 (EEDDEGDKESTDLET) the composition is skewed to acidic residues.

The protein belongs to the Mediator complex subunit 17 family. As to quaternary structure, component of the Mediator complex.

It is found in the nucleus. Component of the Mediator complex, a coactivator involved in the regulated transcription of nearly all RNA polymerase II-dependent genes. Mediator functions as a bridge to convey information from gene-specific regulatory proteins to the basal RNA polymerase II transcription machinery. Mediator is recruited to promoters by direct interactions with regulatory proteins and serves as a scaffold for the assembly of a functional preinitiation complex with RNA polymerase II and the general transcription factors. This chain is Mediator of RNA polymerase II transcription subunit 17 (srb4), found in Emericella nidulans (strain FGSC A4 / ATCC 38163 / CBS 112.46 / NRRL 194 / M139) (Aspergillus nidulans).